A 495-amino-acid polypeptide reads, in one-letter code: Loline biosynthesis cluster 1 transcription factor lolU1 (495 aa).

It localises to the nucleus. Transcriptional regulator that may regulate the expression of the loline biosynthesis cluster 1, one of the 2 clusters involved in the biosynthesis of loline alkaloids, potent insecticidal agents composed of a pyrrolizidine ring system and an uncommon ether bridge linking carbons 2 and 7. This chain is Loline biosynthesis cluster 1 transcription factor lolU1, found in Epichloe uncinata (Endophyte fungus).